Reading from the N-terminus, the 1065-residue chain is Exportin-T (1065 aa).

The protein belongs to the exportin family.

The protein localises to the nucleus. It localises to the cytoplasm. In terms of biological role, tRNA nucleus export receptor which facilitates tRNA translocation across the nuclear pore complex. Involved in pre-tRNA splicing, probably by affecting the interaction of pre-tRNA with splicing endonuclease. The chain is Exportin-T (LOS1) from Coprinopsis cinerea (strain Okayama-7 / 130 / ATCC MYA-4618 / FGSC 9003) (Inky cap fungus).